A 259-amino-acid polypeptide reads, in one-letter code: Keratin-associated protein 10-8 (259 aa).

A 19 X 5 AA repeats of C-C-X(3) region spans residues 26–243 (HVSRVSSPST…SCQPSCCHPA (218 aa)). A run of 19 repeats spans residues 50-54 (CCEPR), 60-64 (CCTPS), 65-69 (CCAPA), 98-102 (CCQQS), 108-112 (CCTSS), 118-122 (CCVPV), 123-127 (CCKSN), 133-137 (CCVSI), 145-149 (CCQQS), 155-159 (CCTFS), 165-169 (CCVPI), 170-174 (CCKPI), 175-179 (CCVPV), 187-191 (CCQKS), 197-201 (CCTTS), 202-206 (CCRPS), 221-225 (CCVPV), 228-232 (CCVPA), and 239-243 (CCHPA).

This sequence belongs to the KRTAP type 10 family. In terms of assembly, interacts with hair keratins. In terms of tissue distribution, restricted to a narrow region of the hair fiber cuticle, lying approximately 20 cell layers above the apex of the dermal papilla of the hair root; not detected in any other tissues.

Functionally, in the hair cortex, hair keratin intermediate filaments are embedded in an interfilamentous matrix, consisting of hair keratin-associated proteins (KRTAP), which are essential for the formation of a rigid and resistant hair shaft through their extensive disulfide bond cross-linking with abundant cysteine residues of hair keratins. The matrix proteins include the high-sulfur and high-glycine-tyrosine keratins. The chain is Keratin-associated protein 10-8 (KRTAP10-8) from Homo sapiens (Human).